The chain runs to 1557 residues: Target of rapamycin complex 1 subunit KOG1 (1557 aa).

HEAT repeat units lie at residues 548 to 586 (RHPP…WAVY), 588 to 625 (SLSI…IDYK), 777 to 814 (CMNT…GFQD), and 888 to 925 (RQEI…RYSN). The span at 1084–1098 (SESNSDSDTQSSNTS) shows a compositional bias: low complexity. The tract at residues 1084 to 1114 (SESNSDSDTQSSNTSMKSHTSKKGPSGLYLL) is disordered. WD repeat units follow at residues 1207–1248 (NNKS…SKFS), 1252–1293 (PFGT…DTFK), 1296–1346 (SAWR…VEVD), 1350–1390 (KTSS…RDSM), 1400–1440 (KQGV…PVES), 1452–1492 (SQQK…NSFK), and 1517–1557 (TSDA…IDYF).

Belongs to the WD repeat RAPTOR family. In terms of assembly, the target of rapamycin complex 1 (TORC1) is composed of at least KOG1, LST8, TCO89 and either TOR1 (TORC1-A) or TOR2 (TORC1-B). Interacts with PIB2; following activation of PIB2 by glutamine or cysteine. TORC1 binds to and is inhibited by FKBP-rapamycin.

It is found in the cell membrane. Its subcellular location is the vacuole membrane. Its function is as follows. Component of TORC1, which regulates multiple cellular processes to control cell growth in response to environmental signals. Nutrient limitation and environmental stress signals cause inactivation of TORC1. Active TORC1 positively controls ribosome biogenesis via control of rRNA, ribosomal protein and tRNA gene expression, and rRNA processing. TORC1 positively controls protein biosynthesis by regulation of mRNA stability, translation initiation factor activity, and high-affinity amino acid permeases that serve to provide amino acids for use by the translation machinery. TORC1 also promotes growth by sequestering a number of nutrient and general stress-responsive transcription factors in the cytoplasm. TORC1 negatively controls macroautophagy, a process to recycle surplus cytoplasmic mass under nutrient starvation conditions. KOG1 may have a role in binding and recruiting substrates of TORC1. In Saccharomyces cerevisiae (strain ATCC 204508 / S288c) (Baker's yeast), this protein is Target of rapamycin complex 1 subunit KOG1 (KOG1).